A 289-amino-acid chain; its full sequence is Mitochondrial fission regulator 1-like (289 aa).

At Thr-27 the chain carries Phosphothreonine. Residues Ser-38, Ser-100, Ser-107, Ser-221, Ser-222, Ser-235, Ser-258, and Ser-270 each carry the phosphoserine modification.

It belongs to the MTFR1 family. In terms of processing, phosphorylated by AMPK. Upon stress, phosphorylation by AMPK is sufficient to induce mitochondrial fragmentation.

It localises to the mitochondrion outer membrane. In terms of biological role, mitochondrial protein required for adaptation of miochondrial dynamics to metabolic changes. Regulates mitochondrial morphology at steady state and mediates AMPK-dependent stress-induced mitochondrial fragmentation via the control of OPA1 levels. This Rattus norvegicus (Rat) protein is Mitochondrial fission regulator 1-like (Mtfr1l).